We begin with the raw amino-acid sequence, 294 residues long: MVKISMKELLEAGVHFGHQTKRWNPKMKPYIFGARNGIYIVDLQKTVRMFRTACEFVSDVVANGGSVLFVGTKKQAREAVYEEANRAEAYYVHNRWLGGMLTNFQTIKKGIDRLNYLNEIKLNETINLFPKKERLKLEKERVKLDANLGGIRTMTKLPSVIFIIDPKNEAIAVREAKRLNIPTVAVVDTNCDPDDIDYVIPGNDDAIRAIRLLTSRIAEAVVQGKQIAAERRAAEQDKAADDKAQEQAAAEAAKPEPAAPAPAAEAAEEAPAEEGPIIEVIKKSGSEEDGEAAN.

Residues 232–245 (RAAEQDKAADDKAQ) are compositionally biased toward basic and acidic residues. The disordered stretch occupies residues 232 to 294 (RAAEQDKAAD…GSEEDGEAAN (63 aa)). Residues 246–265 (EQAAAEAAKPEPAAPAPAAE) are compositionally biased toward low complexity.

It belongs to the universal ribosomal protein uS2 family.

This is Small ribosomal subunit protein uS2 from Desulfatibacillum aliphaticivorans.